A 59-amino-acid polypeptide reads, in one-letter code: UPF0391 membrane protein Geob_0344 (59 aa).

Helical transmembrane passes span 4-24 and 33-53; these read WAAIFFIIAIVAAVFGFTGIA and FLFILFLVVALIMLILGITAG.

This sequence belongs to the UPF0391 family.

It localises to the cell membrane. In Geotalea daltonii (strain DSM 22248 / JCM 15807 / FRC-32) (Geobacter daltonii), this protein is UPF0391 membrane protein Geob_0344.